The primary structure comprises 389 residues: Phospholipid phosphatase-related protein type 2 (389 aa).

The next 2 helical transmembrane spans lie at 14-34 and 66-86; these read IIPC…AFFP and FLGV…AGQV. An N-linked (GlcNAc...) asparagine glycan is attached at Asn102. Transmembrane regions (helical) follow at residues 147–167, 176–196, and 203–223; these read AALC…VFRV, SLCL…VAEY, and VLAG…CVVH. Phosphoserine is present on residues Ser236 and Ser249. Disordered stretches follow at residues 255-280 and 295-351; these read SVAQ…PQNC and APAM…GRKL. Residues 265–278 show a composition bias toward polar residues; it reads SHSTPARLTPSKPQ. Over residues 314–339 the composition is skewed to pro residues; it reads TPLPLPLPLPAPAPSQGPSPSSPGPG.

This sequence belongs to the PA-phosphatase related phosphoesterase family.

The protein localises to the membrane. The sequence is that of Phospholipid phosphatase-related protein type 2 from Bos taurus (Bovine).